We begin with the raw amino-acid sequence, 479 residues long: Flavonol 3-O-glucosyltransferase UGT71C4 (479 aa).

Catalysis depends on histidine 17, which acts as the Proton acceptor. Histidine 17 lines the an anthocyanidin pocket. Aspartate 127 functions as the Charge relay in the catalytic mechanism. Threonine 150, alanine 350, glutamine 352, histidine 367, tryptophan 370, asparagine 371, serine 372, and glutamate 375 together coordinate UDP-alpha-D-glucose. Alanine 390 is a binding site for an anthocyanidin. UDP-alpha-D-glucose is bound by residues glutamate 391 and glutamine 392.

This sequence belongs to the UDP-glycosyltransferase family.

It catalyses the reaction a flavonol + UDP-alpha-D-glucose = a flavonol 3-O-beta-D-glucoside + UDP + H(+). The enzyme catalyses a 7-O-hydroxy-flavonol + UDP-alpha-D-glucose = a flavonol 7-O-beta-D-glucoside + UDP + H(+). In terms of biological role, possesses quercetin 3-O-glucosyltransferase and 7-O-glucosyltransferase activities in vitro. Also active in vitro on benzoates and benzoate derivatives. The chain is Flavonol 3-O-glucosyltransferase UGT71C4 from Arabidopsis thaliana (Mouse-ear cress).